Reading from the N-terminus, the 458-residue chain is MEEERESLYEEMGCFDPNTPAEVTVESSFSQAEPPPPPPQVLVAGSTSNSNCSVEVEELSEFHLSPQDCPQASSTPLQFHINPPPPPPPPCDQLHNNLIHQMASHQQQHSNWDNGYQDFVNLGPNSATTPDLLSLLHLPRCSLPPNHHPSSMLPTSFSDIMSSSSAAAVMYDPLFHLNFPMQPRDQNQLRNGSCLLGVEDQIQMDANGGMNVLYFEGANNNNGGFENEILEFNNGVTRKGRGSRKSRTSPTERERRVHFNDRFFDLKNLIPNPTKIDRASIVGEAIDYIKELLRTIEEFKMLVEKKRCGRFRSKKRARVGEGGGGEDQEEEEDTVNYKPQSEVDQSCFNKNNNNSLRCSWLKRKSKVTEVDVRIIDDEVTIKLVQKKKINCLLFTTKVLDQLQLDLHHVAGGQIGEHYSFLFNTKICEGSCVYASGIADTLMEVVEKQYMEAVPSNGY.

Positions 1–49 (MEEERESLYEEMGCFDPNTPAEVTVESSFSQAEPPPPPPQVLVAGSTSN) are disordered. Residues 243–292 (SRKSRTSPTERERRVHFNDRFFDLKNLIPNPTKIDRASIVGEAIDYIKEL) form the bHLH domain. A disordered region spans residues 315-338 (KRARVGEGGGGEDQEEEEDTVNYK). Residues 324 to 334 (GGEDQEEEEDT) show a composition bias toward acidic residues.

Homodimer.

The protein localises to the nucleus. The chain is Transcription factor bHLH10 (BHLH10) from Arabidopsis thaliana (Mouse-ear cress).